Consider the following 184-residue polypeptide: ATP synthase subunit b, chloroplastic (184 aa).

The chain crosses the membrane as a helical span at residues L27 to L49.

Belongs to the ATPase B chain family. As to quaternary structure, F-type ATPases have 2 components, F(1) - the catalytic core - and F(0) - the membrane proton channel. F(1) has five subunits: alpha(3), beta(3), gamma(1), delta(1), epsilon(1). F(0) has four main subunits: a(1), b(1), b'(1) and c(10-14). The alpha and beta chains form an alternating ring which encloses part of the gamma chain. F(1) is attached to F(0) by a central stalk formed by the gamma and epsilon chains, while a peripheral stalk is formed by the delta, b and b' chains.

The protein resides in the plastid. The protein localises to the chloroplast thylakoid membrane. F(1)F(0) ATP synthase produces ATP from ADP in the presence of a proton or sodium gradient. F-type ATPases consist of two structural domains, F(1) containing the extramembraneous catalytic core and F(0) containing the membrane proton channel, linked together by a central stalk and a peripheral stalk. During catalysis, ATP synthesis in the catalytic domain of F(1) is coupled via a rotary mechanism of the central stalk subunits to proton translocation. Its function is as follows. Component of the F(0) channel, it forms part of the peripheral stalk, linking F(1) to F(0). The protein is ATP synthase subunit b, chloroplastic of Carica papaya (Papaya).